Reading from the N-terminus, the 261-residue chain is MDLQGRAVPSVDRLRVLLMLFHTMAQIMAEQEVENLSGLSTNPEKDIFVVRENGTTCLMAEFAAKFIVPYDVWASNYVDLITEQADIALTRGAEVGRCGHSESELQVFWVDRAYALKMLFVKESHNMSKGPEETWRLSKVQFVYDSSEKTHFKDAVSAGKHTANSHHLSALVTPAGKSYECQAQQTISLASSDPQKTVTMILSAVHIQPFDIISDFVFSEEHKCAVDEREQLEETLPLILGLILGLVIVVTLAIYHVHPQK.

An N-terminal signal peptide occupies residues 1-29 (MDLQGRAVPSVDRLRVLLMLFHTMAQIMA). The Extracellular portion of the chain corresponds to 30–234 (EQEVENLSGL…AVDEREQLEE (205 aa)). Asparagine 35, asparagine 53, and asparagine 126 each carry an N-linked (GlcNAc...) asparagine glycan. The helical transmembrane segment at 235 to 255 (TLPLILGLILGLVIVVTLAIY) threads the bilayer. Residues 256 to 261 (HVHPQK) lie on the Cytoplasmic side of the membrane.

This sequence belongs to the LAMP family. In terms of processing, glycosylated.

It localises to the cytoplasmic vesicle membrane. The protein resides in the cell membrane. The protein localises to the cell projection. It is found in the dendrite. Its subcellular location is the cytoplasmic vesicle. It localises to the secretory vesicle. The protein resides in the synaptic vesicle membrane. The protein localises to the growth cone membrane. It is found in the early endosome membrane. Its subcellular location is the recycling endosome. It localises to the endoplasmic reticulum-Golgi intermediate compartment membrane. The protein resides in the endosome membrane. Its function is as follows. Plays a role in short-term synaptic plasticity in a subset of GABAergic neurons in the brain. This is Lysosome-associated membrane glycoprotein 5 (LAMP5) from Pongo abelii (Sumatran orangutan).